The chain runs to 308 residues: Transaldolase (308 aa).

Residue Lys125 is the Schiff-base intermediate with substrate of the active site.

Belongs to the transaldolase family. Type 1 subfamily. As to quaternary structure, homodimer.

Its subcellular location is the cytoplasm. It catalyses the reaction D-sedoheptulose 7-phosphate + D-glyceraldehyde 3-phosphate = D-erythrose 4-phosphate + beta-D-fructose 6-phosphate. It functions in the pathway carbohydrate degradation; pentose phosphate pathway; D-glyceraldehyde 3-phosphate and beta-D-fructose 6-phosphate from D-ribose 5-phosphate and D-xylulose 5-phosphate (non-oxidative stage): step 2/3. Transaldolase is important for the balance of metabolites in the pentose-phosphate pathway. This is Transaldolase from Ectopseudomonas mendocina (strain ymp) (Pseudomonas mendocina).